A 349-amino-acid chain; its full sequence is RING-H2 finger protein ATL48 (349 aa).

The 85-residue stretch at 1-85 folds into the HIG1 domain; that stretch reads MSSVEPDMED…DNPWKKLLLS (85 aa). N-acetylserine is present on serine 2. The next 3 membrane-spanning stretches (helical) occupy residues 21–41, 55–75, and 121–141; these read PLVPLGALMTAGVLTAGLISF, ARVVVQGATVALMVGTGYYYG, and CLVISGLALIIVFLGVLYLIF. The RING-type; atypical zinc finger occupies 207–249; sequence CAVCLNEFSDTDKLRLLPVCSHAFHLHCIDTWLLSNSTCPLCR.

The protein belongs to the RING-type zinc finger family. ATL subfamily.

The protein localises to the membrane. The enzyme catalyses S-ubiquitinyl-[E2 ubiquitin-conjugating enzyme]-L-cysteine + [acceptor protein]-L-lysine = [E2 ubiquitin-conjugating enzyme]-L-cysteine + N(6)-ubiquitinyl-[acceptor protein]-L-lysine.. Its pathway is protein modification; protein ubiquitination. The polypeptide is RING-H2 finger protein ATL48 (ATL48) (Arabidopsis thaliana (Mouse-ear cress)).